Consider the following 345-residue polypeptide: GTPase Obg (345 aa).

Residues 1 to 158 form the Obg domain; the sequence is MFIDSVKITL…RLVRLELKLI (158 aa). Residues 159-339 enclose the OBG-type G domain; the sequence is ADVGLVGFPN…LKFMLLEEIK (181 aa). Residues 165-172, 190-194, 212-215, 280-283, and 320-322 each bind GTP; these read GFPNVGKS, FTTLT, DIPG, SKSD, and SSL. Positions 172 and 192 each coordinate Mg(2+).

It belongs to the TRAFAC class OBG-HflX-like GTPase superfamily. OBG GTPase family. In terms of assembly, monomer. It depends on Mg(2+) as a cofactor.

Its subcellular location is the cytoplasm. Functionally, an essential GTPase which binds GTP, GDP and possibly (p)ppGpp with moderate affinity, with high nucleotide exchange rates and a fairly low GTP hydrolysis rate. Plays a role in control of the cell cycle, stress response, ribosome biogenesis and in those bacteria that undergo differentiation, in morphogenesis control. The protein is GTPase Obg of Campylobacter jejuni subsp. doylei (strain ATCC BAA-1458 / RM4099 / 269.97).